The following is a 252-amino-acid chain: Probable transcriptional regulatory protein Tmel_0985 (252 aa).

It belongs to the TACO1 family.

It is found in the cytoplasm. The protein is Probable transcriptional regulatory protein Tmel_0985 of Thermosipho melanesiensis (strain DSM 12029 / CIP 104789 / BI429).